The chain runs to 191 residues: NAD(P)H dehydrogenase (quinone) (191 aa).

The region spanning 4 to 184 (ILVIFHSITG…VAKMLGKRVA (181 aa)) is the Flavodoxin-like domain. Residues 10-15 (SITGNT), 83-85 (TRF), and 118-124 (SNEMPHG) contribute to the FMN site.

This sequence belongs to the WrbA family. In terms of assembly, homodimer and homotetramer; in equilibrium. It depends on FMN as a cofactor.

The catalysed reaction is a quinone + NADH + H(+) = a quinol + NAD(+). The enzyme catalyses a quinone + NADPH + H(+) = a quinol + NADP(+). Its function is as follows. It seems to function in response to environmental stress when various electron transfer chains are affected or when the environment is highly oxidizing. It reduces quinones to the hydroquinone state to prevent interaction of the semiquinone with O2 and production of superoxide. It prefers NADH over NADPH. The sequence is that of NAD(P)H dehydrogenase (quinone) from Archaeoglobus fulgidus (strain ATCC 49558 / DSM 4304 / JCM 9628 / NBRC 100126 / VC-16).